We begin with the raw amino-acid sequence, 1486 residues long: Chromosome partition protein MukB (1486 aa).

Gly34–Ser41 contacts ATP. Coiled coils occupy residues Leu326–Gln418, Leu444–Gln480, and Arg509–Val603. Residues Pro666–Arg783 are flexible hinge. Coiled-coil stretches lie at residues Glu835 to Glu923, Glu977 to Ala1115, and Val1209 to Ser1266.

Belongs to the SMC family. MukB subfamily. Homodimerization via its hinge domain. Binds to DNA via its C-terminal region. Interacts, and probably forms a ternary complex, with MukE and MukF via its C-terminal region. The complex formation is stimulated by calcium or magnesium. Interacts with tubulin-related protein FtsZ.

Its subcellular location is the cytoplasm. The protein localises to the nucleoid. Functionally, plays a central role in chromosome condensation, segregation and cell cycle progression. Functions as a homodimer, which is essential for chromosome partition. Involved in negative DNA supercoiling in vivo, and by this means organize and compact chromosomes. May achieve or facilitate chromosome segregation by condensation DNA from both sides of a centrally located replisome during cell division. This is Chromosome partition protein MukB from Shigella boydii serotype 4 (strain Sb227).